We begin with the raw amino-acid sequence, 872 residues long: MKKQLNPKYDHLQVEKDKYQYWLDKNLFKADINSNKPKFSIILPPPNVTGKLHIGHAWDTSLQDAIIRFKKLTGYDTLFLPGMDHSGISTQVKVEAKLKQQGIDKNKLGREKFLLEAWKWKEEYANIIRKQWAKLGLSLDYSTEKFTLDEDINQIVKEIFVKFYNDQIIYKDKQIVNWDPEQKTAISNVEVIYKETQSKMYYFKYILEDSNEYLTVATTRPETMFADQCLVVNPNDSRYQKYINKKVINPVNKQVIPIISDEYVDIEFGTGVMKCTPAHDLNDYHLGIKHNLKMPICLNIDGSVNQLGGKYQGLDRFVARKKIIKNAIKEDLFVKEEDIINQVGFSERSNAIVEPYLSDQWFVKMDKFKNMVIDLQNSDNKINFYPNRFSDVLNRWMTDAHDWCISRQLWWGHQIPCWYHKKTNEMYVGINPPSDIENWTQDQDVLDTWFSSGLWAFSTLLNNKGLESEYFKNYFPTSVLVTGYDIIFFWVARMIFQTLEYTKQIPFKDVLIHGLVRDESNRKMSKSLGNGIDPMDVINNNGCDSLRLFLLTNSTPGQDIRYSNEKILASWNFINKLWNASRYVFLNLDEDFKFDPNFYKTDLEITNQWILTQLSKTQTYVYEKMNKYEFSLAGNHLWDFVWNKYCSWYIEFSKVNLNNDKFTHQTKQTLFYVLKEILIMLHPLIPFVSEEIYLNMMLKESILLEQWTNLNSNYDTSFIDDVIKMITSIREFRNTKNIKNDVCLSVNISNTNQNHTKLFKKHFDQIYNFLFNFCNTKLVDEAIKNKTSLSIDEYFIEIANDSFINKNELIKELEQKQNYLNNEITRSQKILNNQEFIKKAKPEKIQSEKIKYQNYLDQLQAIKDKLKELTND.

A 'HIGH' region motif is present at residues 46-56; it reads PNVTGKLHIGH. The 'KMSKS' region motif lies at 523–527; that stretch reads KMSKS. Lys526 serves as a coordination point for ATP. A coiled-coil region spans residues 796–872; it reads IEIANDSFIN…KDKLKELTND (77 aa).

It belongs to the class-I aminoacyl-tRNA synthetase family. ValS type 1 subfamily. In terms of assembly, monomer.

The protein localises to the cytoplasm. It catalyses the reaction tRNA(Val) + L-valine + ATP = L-valyl-tRNA(Val) + AMP + diphosphate. In terms of biological role, catalyzes the attachment of valine to tRNA(Val). As ValRS can inadvertently accommodate and process structurally similar amino acids such as threonine, to avoid such errors, it has a 'posttransfer' editing activity that hydrolyzes mischarged Thr-tRNA(Val) in a tRNA-dependent manner. In Mycoplasma mycoides subsp. mycoides SC (strain CCUG 32753 / NCTC 10114 / PG1), this protein is Valine--tRNA ligase.